Here is a 208-residue protein sequence, read N- to C-terminus: Large ribosomal subunit protein uL4 (208 aa).

Residues 45 to 89 form a disordered region; sequence RQGTHAHKNRSAVSGGGKKPWRQKGTGRARQGSTRSPQWRGGGTV.

This sequence belongs to the universal ribosomal protein uL4 family. As to quaternary structure, part of the 50S ribosomal subunit.

Its function is as follows. One of the primary rRNA binding proteins, this protein initially binds near the 5'-end of the 23S rRNA. It is important during the early stages of 50S assembly. It makes multiple contacts with different domains of the 23S rRNA in the assembled 50S subunit and ribosome. Forms part of the polypeptide exit tunnel. The chain is Large ribosomal subunit protein uL4 from Lactococcus lactis subsp. cremoris (strain MG1363).